The following is a 317-amino-acid chain: Aspartate carbamoyltransferase catalytic subunit (317 aa).

Carbamoyl phosphate contacts are provided by Arg66 and Thr67. Position 94 (Lys94) interacts with L-aspartate. Positions 116, 144, and 147 each coordinate carbamoyl phosphate. The L-aspartate site is built by Arg177 and Arg231. Residues Gly272 and Pro273 each contribute to the carbamoyl phosphate site.

It belongs to the aspartate/ornithine carbamoyltransferase superfamily. ATCase family. In terms of assembly, heterododecamer (2C3:3R2) of six catalytic PyrB chains organized as two trimers (C3), and six regulatory PyrI chains organized as three dimers (R2).

It catalyses the reaction carbamoyl phosphate + L-aspartate = N-carbamoyl-L-aspartate + phosphate + H(+). The protein operates within pyrimidine metabolism; UMP biosynthesis via de novo pathway; (S)-dihydroorotate from bicarbonate: step 2/3. Catalyzes the condensation of carbamoyl phosphate and aspartate to form carbamoyl aspartate and inorganic phosphate, the committed step in the de novo pyrimidine nucleotide biosynthesis pathway. The sequence is that of Aspartate carbamoyltransferase catalytic subunit from Rhodopseudomonas palustris (strain HaA2).